A 2449-amino-acid polypeptide reads, in one-letter code: Nonribisomal peptide synthetase phqB (2449 aa).

The segment at 253–654 (IQVHSGPGRL…GRRDTVVKIR (402 aa)) is adenylation 1. Residues 795 to 870 (LPMTPNEDVL…LRTVAKEARP (76 aa)) enclose the Carrier 1 domain. An O-(pantetheine 4'-phosphoryl)serine modification is found at serine 815. Positions 913 to 1337 (QDIYPTTPLQ…LISDRDSELL (425 aa)) are condensation 1. The interval 1357-1756 (EAQVTRNPSK…TFTFLGRTNQ (400 aa)) is adenylation 2. The 79-residue stretch at 1915–1993 (WALSKHIGQL…MVAEMIDRTP (79 aa)) folds into the Carrier 2 domain. Serine 1952 is subject to O-(pantetheine 4'-phosphoryl)serine. Residues 2041–2297 (LTGATGFLGT…VAAVDWVASL (257 aa)) are reductase (R) domain. Residues threonine 2045, methionine 2249, and asparagine 2259 each contribute to the NADPH site.

This sequence belongs to the NRP synthetase family.

It functions in the pathway alkaloid biosynthesis. In terms of biological role, nonribisomal peptide synthetase; part of the gene cluster that mediates the biosynthesis of paraherquamide, a fungal indole alkaloid that belongs to a family of natural products containing a characteristic bicyclo[2.2.2]diazaoctane core. The first steps in the biosynthesis of paraherquamide is the production of the beta-methyl-proline precursor from L-isoleucine. They require oxidation of a terminally hydroxylated L-isoleucine to the corresponding aldehyde by enzymes which have still to be identified. Spontaneous cyclization and dehydration would yield the 4-methyl pyrolline-5-carboxylic acid, which is then reduced by the pyrroline-5-carboxylate reductase phqD leading to the beta-methyl-proline precursor. The next step of paraherquamide biosynthesis involves coupling of beta-methyl-proline and L-tryptophan by the bimodular NRPS phqB, to produce a monooxopiperazine intermediate. The reductase (R) domain of phqB utilizes NADPH for hydride transfer to reduce the thioester bond of the T domain-tethered linear dipeptide to a hemithioaminal intermediate, which spontaneously cleaves the C-S bond to release the aldehyde product. This compound undergoes spontaneous cyclization and dehydration to give a dienamine which is reverse prenylated at C-2 by the reverse prenyltransferase phqJ. The other prenyltransferase present in the cluster, phqI may be a redundant gene in the pathway. During biosynthetic assembly, the key step to produce the polycyclic core is catalyzed by the bifunctional reductase and intramolecular [4+2] Diels-Alderase, phqE, resulting in formation of the [2.2.2] diazaoctane intermediate preparaherquamide. Following formation of preparaherquamide, an indole 2,3-epoxidation-initiated pinacol-like rearrangement is catalyzed by the phqK FAD-dependent monooxygenase. The prenyltransferase phqA, the cytochrome P450 monooxygenase phqL, and the FAD-linked oxidoreductase phqH (or the cytochrome P450 monooxygenase phqM), are proposed to be involved in the formation of the pyran ring. The FAD-dependent monooxygenase phqK is likely responsible for generation of the spiro-oxindole, and the N-methylation is likely mediated by the phqN methyltransferase leading to the isolable natural product paraherquamide F. However, the order of these biosynthetic steps has still to be determined. In late-stage paraherquamide biosynthesis, the third P450 monooxygenase, phqO, is probably responsible for the C-14 hydroxylation, transforming paraherquamide F to paraherquamide G, and paraherquamide E to the final product paraherquamide A. The expansion from the 6-membered ring pyran (in paraherquamides F and G) to the 7-membered dioxepin ring (in paraherquamides A and E) represents a poorly understood but intriguing process that probably involves the 2-oxoglutarate-dependent dioxygenase phqC. Finally, the remaining members of the paraherquamide cluster, including phqI as well as phqM (or phqH), do not have a clearly prescribed role and appear to be redundant. This chain is Nonribisomal peptide synthetase phqB, found in Penicillium fellutanum.